We begin with the raw amino-acid sequence, 170 residues long: 4-hydroxyphenylacetate 3-monooxygenase reductase component (170 aa).

It belongs to the non-flavoprotein flavin reductase family. HpaC subfamily. As to quaternary structure, homodimer. 4-HPA 3-monooxygenase consists of a reductase component HpaC and an oxygenase component HpaB.

It carries out the reaction a reduced flavin + NAD(+) = an oxidized flavin + NADH + 2 H(+). The protein operates within aromatic compound metabolism; 4-hydroxyphenylacetate degradation; pyruvate and succinate semialdehyde from 4-hydroxyphenylacetate: step 1/7. Functionally, catalyzes the reduction of free flavins (FMN, FAD and riboflavin) by NADH. Subsequently, the reduced flavins diffuse to the large HpaB component or to other electron acceptors such as cytochrome c and Fe(3+) ion. This is 4-hydroxyphenylacetate 3-monooxygenase reductase component (hpaC) from Salmonella typhimurium (strain LT2 / SGSC1412 / ATCC 700720).